The chain runs to 505 residues: Nicotinamide phosphoribosyltransferase (505 aa).

R196 is a binding site for diphosphate. D219 contributes to the beta-nicotinamide D-ribonucleotide binding site. H246 and R314 together coordinate diphosphate. Residues 314–316 (RPD), 369–370 (GD), and R408 each bind beta-nicotinamide D-ribonucleotide.

This sequence belongs to the NAPRTase family.

It carries out the reaction beta-nicotinamide D-ribonucleotide + diphosphate = 5-phospho-alpha-D-ribose 1-diphosphate + nicotinamide + H(+). It participates in cofactor biosynthesis; NAD(+) biosynthesis; nicotinamide D-ribonucleotide from 5-phospho-alpha-D-ribose 1-diphosphate and nicotinamide: step 1/1. Its activity is regulated as follows. 10-fold more active in the presence of saturating ATP. In terms of biological role, catalyzes the condensation of nicotinamide with 5-phosphoribosyl-1-pyrophosphate to yield nicotinamide mononucleotide, an intermediate in the biosynthesis of NAD. Functions in the nondeamidating salvage pathway for production of NAD from nicotinamide. Displays a strict preference for nicotinamide over nicotinate substrate. This is Nicotinamide phosphoribosyltransferase from Acinetobacter baylyi (strain ATCC 33305 / BD413 / ADP1).